The sequence spans 346 residues: NADH-cytochrome b5 reductase 2 (346 aa).

A helical transmembrane segment spans residues 28–50; that stretch reads GGSNAALYAGLAAAAGAGAYYFL. Positions 95 to 200 constitute an FAD-binding FR-type domain; sequence QGFISLKLDS…KGPIPKYPWS (106 aa). 203-238 is an FAD binding site; it reads KHDHIALIAGGTGITPMYQLARAIFNNPADKTKVTL.

Belongs to the flavoprotein pyridine nucleotide cytochrome reductase family. FAD is required as a cofactor.

The protein localises to the mitochondrion outer membrane. It carries out the reaction 2 Fe(III)-[cytochrome b5] + NADH = 2 Fe(II)-[cytochrome b5] + NAD(+) + H(+). Functionally, may mediate the reduction of outer membrane cytochrome b5. In Botryotinia fuckeliana (strain B05.10) (Noble rot fungus), this protein is NADH-cytochrome b5 reductase 2 (mcr1).